Here is a 55-residue protein sequence, read N- to C-terminus: uncharacterized protein (55 aa).

This is an uncharacterized protein from Clostridium perfringens.